We begin with the raw amino-acid sequence, 299 residues long: tRNA dimethylallyltransferase (299 aa).

ATP is bound at residue 13-20 (GATASGKT). Residue 15–20 (TASGKT) coordinates substrate. Residues 38–41 (DSRQ) form an interaction with substrate tRNA region.

The protein belongs to the IPP transferase family. Monomer. Requires Mg(2+) as cofactor.

The enzyme catalyses adenosine(37) in tRNA + dimethylallyl diphosphate = N(6)-dimethylallyladenosine(37) in tRNA + diphosphate. Its function is as follows. Catalyzes the transfer of a dimethylallyl group onto the adenine at position 37 in tRNAs that read codons beginning with uridine, leading to the formation of N6-(dimethylallyl)adenosine (i(6)A). The polypeptide is tRNA dimethylallyltransferase (Prochlorococcus marinus (strain MIT 9312)).